An 87-amino-acid polypeptide reads, in one-letter code: HssA/B-like protein 58 (87 aa).

Over residues Met1–Pro13 the composition is skewed to polar residues. The segment at Met1 to Met31 is disordered. Residues Asn14–Met31 are compositionally biased toward low complexity.

Belongs to the hssA/B family.

This Dictyostelium discoideum (Social amoeba) protein is HssA/B-like protein 58 (hssl58).